A 423-amino-acid polypeptide reads, in one-letter code: Gamma-glutamyl phosphate reductase (423 aa).

Belongs to the gamma-glutamyl phosphate reductase family.

Its subcellular location is the cytoplasm. The enzyme catalyses L-glutamate 5-semialdehyde + phosphate + NADP(+) = L-glutamyl 5-phosphate + NADPH + H(+). It functions in the pathway amino-acid biosynthesis; L-proline biosynthesis; L-glutamate 5-semialdehyde from L-glutamate: step 2/2. Its function is as follows. Catalyzes the NADPH-dependent reduction of L-glutamate 5-phosphate into L-glutamate 5-semialdehyde and phosphate. The product spontaneously undergoes cyclization to form 1-pyrroline-5-carboxylate. The sequence is that of Gamma-glutamyl phosphate reductase from Magnetococcus marinus (strain ATCC BAA-1437 / JCM 17883 / MC-1).